The following is a 218-amino-acid chain: Tubulin polymerization-promoting protein (218 aa).

The interval 1-45 (MADSKAKPTKAANKTPPKSPGDPAKAAKRLSLESEGANEGAAAAP) is disordered. Residues 2–115 (ADSKAKPTKA…SCRTITFEQF (114 aa)) are mediates interaction with LIMK1. Position 15 is a phosphothreonine (Thr15). A phosphoserine mark is found at Ser19, Ser31, and Ser34. A compositionally biased stretch (low complexity) spans 33 to 45 (ESEGANEGAAAAP). Zn(2+) contacts are provided by His60, His71, Cys79, and Cys82. Thr91 bears the Phosphothreonine mark. The residue at position 106 (Ser106) is a Phosphoserine. An O-linked (GlcNAc) serine glycan is attached at Ser151. Phosphoserine occurs at positions 158 and 159. The disordered stretch occupies residues 165 to 192 (LTDTSKFTGSHKERFDQSGKGKGKAGRV). The span at 174-183 (SHKERFDQSG) shows a compositional bias: basic and acidic residues.

This sequence belongs to the TPPP family. As to quaternary structure, homodimer. Binds tubulin; binding is inhibited by GTP. Interacts with MAPK1. Interacts with GAPDH; the interaction is direct. Interacts with LIMK1 (via the PDZ domain); the interaction is direct. Interacts with LIMK2. Interacts with HDAC6; thereby inhibiting the tubulin deacetylase activity of HDAC6. Interacts with aggregated SNCA; may have a pro-aggregatory role in synucleinopathies. Interacts with DYNLL1. Interacts (via C-terminus) with S100A2, S100A6 and S100B; these interactions inhibit TPPP dimerization. Requires Mg(2+) as cofactor. In terms of processing, phosphorylated by LIMK1 on serine residues; phosphorylation may alter the tubulin polymerization activity. Phosphorylation by LIMK2, but not LIMK1, regulates astral microtubule organization at early stage of mitosis. Phosphorylation by ROCK1 at Ser-31, Ser-106 and Ser-158 inhibits interaction with HDAC6, resulting in decreased acetylation of tubulin, increased cell motility and entry into S-phase. Phosphorylation by CDK1 inhibits the microtubule polymerizing activity. Degraded by the proteasome; zinc-binding inhibits degradation by the proteasome. Predominantly expressed in mature oligodendrocytes.

It localises to the golgi outpost. The protein localises to the cytoplasm. The protein resides in the cytoskeleton. Its subcellular location is the microtubule organizing center. It is found in the nucleus. It localises to the spindle. The catalysed reaction is GTP + H2O = GDP + phosphate + H(+). In terms of biological role, regulator of microtubule dynamics that plays a key role in myelination by promoting elongation of the myelin sheath. Acts as a microtubule nucleation factor in oligodendrocytes: specifically localizes to the postsynaptic Golgi apparatus region, also named Golgi outpost, and promotes microtubule nucleation, an important step for elongation of the myelin sheath. Required for both uniform polarized growth of distal microtubules as well as directing the branching of proximal processes. Shows magnesium-dependent GTPase activity; the role of the GTPase activity is unclear. In addition to microtubule nucleation activity, also involved in microtubule bundling and stabilization of existing microtubules, thereby maintaining the integrity of the microtubule network. Regulates microtubule dynamics by promoting tubulin acetylation: acts by inhibiting the tubulin deacetylase activity of HDAC6. Also regulates cell migration: phosphorylation by ROCK1 inhibits interaction with HDAC6, resulting in decreased acetylation of tubulin and increased cell motility. Plays a role in cell proliferation by regulating the G1/S-phase transition. Involved in astral microtubule organization and mitotic spindle orientation during early stage of mitosis; this process is regulated by phosphorylation by LIMK2. The sequence is that of Tubulin polymerization-promoting protein from Rattus norvegicus (Rat).